The following is a 422-amino-acid chain: UDP-N-acetylglucosamine 1-carboxyvinyltransferase (422 aa).

22–23 (KN) serves as a coordination point for phosphoenolpyruvate. UDP-N-acetyl-alpha-D-glucosamine is bound at residue Arg93. The Proton donor role is filled by Cys117. Cys117 bears the 2-(S-cysteinyl)pyruvic acid O-phosphothioketal mark. Residues 122-126 (RPVDL), 162-165 (KVSV), Asp307, and Ile329 each bind UDP-N-acetyl-alpha-D-glucosamine.

The protein belongs to the EPSP synthase family. MurA subfamily.

It is found in the cytoplasm. It catalyses the reaction phosphoenolpyruvate + UDP-N-acetyl-alpha-D-glucosamine = UDP-N-acetyl-3-O-(1-carboxyvinyl)-alpha-D-glucosamine + phosphate. It participates in cell wall biogenesis; peptidoglycan biosynthesis. Functionally, cell wall formation. Adds enolpyruvyl to UDP-N-acetylglucosamine. This Hamiltonella defensa subsp. Acyrthosiphon pisum (strain 5AT) protein is UDP-N-acetylglucosamine 1-carboxyvinyltransferase.